The chain runs to 479 residues: Polyadenylate-binding protein-interacting protein 1 (479 aa).

The interval methionine 1 to alanine 114 is disordered. Serine 2 carries the post-translational modification N-acetylalanine. Over residues alanine 11–asparagine 33 the composition is skewed to gly residues. Arginine 21 carries the omega-N-methylarginine modification. The span at proline 45 to glycine 69 shows a compositional bias: pro residues. Polar residues predominate over residues proline 98–serine 111. A PABPC1-interacting motif-2 (PAM2) region spans residues proline 116–serine 143. The segment at threonine 157–serine 375 is PAIP1 middle domain (PAIP1M). Positions serine 159 to asparagine 376 constitute an MIF4G domain. Residues aspartate 435–aspartate 455 are disordered. The tract at residues glycine 440–glutamine 479 is PABPC1-interacting motif-1 (PAM1).

Interacts with the RRM1-RRM2 and C-terminus regions of PABPC1 in a 1:1 stoichiometry. Interacts with EIF4A. As to quaternary structure, (Microbial infection) Interacts (via PAIP1M) with human SARS coronaviruses SARS-COV and SARS-COV-2 NSP3 protein (via SARS-unique domain); the interaction increases binding affinity with PABPC1.

Its subcellular location is the cytoplasm. Its function is as follows. Acts as a coactivator in the regulation of translation initiation of poly(A)-containing mRNAs. Its stimulatory activity on translation is mediated via its action on PABPC1. Competes with PAIP2 for binding to PABPC1. Its association with EIF4A and PABPC1 may potentiate contacts between mRNA termini. May also be involved in translationally coupled mRNA turnover. Implicated with other RNA-binding proteins in the cytoplasmic deadenylation/translational and decay interplay of the FOS mRNA mediated by the major coding-region determinant of instability (mCRD) domain. In terms of biological role, (Microbial infection) Upon interaction with SARS coronavirus SARS-CoV NSP3 protein, plays an important role in viral protein synthesis. This is Polyadenylate-binding protein-interacting protein 1 from Homo sapiens (Human).